A 247-amino-acid polypeptide reads, in one-letter code: 3-deoxy-manno-octulosonate cytidylyltransferase (247 aa).

This sequence belongs to the KdsB family.

The protein resides in the cytoplasm. It carries out the reaction 3-deoxy-alpha-D-manno-oct-2-ulosonate + CTP = CMP-3-deoxy-beta-D-manno-octulosonate + diphosphate. It functions in the pathway nucleotide-sugar biosynthesis; CMP-3-deoxy-D-manno-octulosonate biosynthesis; CMP-3-deoxy-D-manno-octulosonate from 3-deoxy-D-manno-octulosonate and CTP: step 1/1. Its pathway is bacterial outer membrane biogenesis; lipopolysaccharide biosynthesis. Activates KDO (a required 8-carbon sugar) for incorporation into bacterial lipopolysaccharide in Gram-negative bacteria. The sequence is that of 3-deoxy-manno-octulosonate cytidylyltransferase from Rhodopseudomonas palustris (strain BisA53).